The sequence spans 300 residues: 4-hydroxy-tetrahydrodipicolinate synthase (300 aa).

Pyruvate is bound at residue Thr-57. The active-site Proton donor/acceptor is Tyr-145. Lys-173 acts as the Schiff-base intermediate with substrate in catalysis. Ile-213 is a pyruvate binding site.

Belongs to the DapA family. As to quaternary structure, homotetramer; dimer of dimers.

The protein resides in the cytoplasm. The enzyme catalyses L-aspartate 4-semialdehyde + pyruvate = (2S,4S)-4-hydroxy-2,3,4,5-tetrahydrodipicolinate + H2O + H(+). It functions in the pathway amino-acid biosynthesis; L-lysine biosynthesis via DAP pathway; (S)-tetrahydrodipicolinate from L-aspartate: step 3/4. Catalyzes the condensation of (S)-aspartate-beta-semialdehyde [(S)-ASA] and pyruvate to 4-hydroxy-tetrahydrodipicolinate (HTPA). The chain is 4-hydroxy-tetrahydrodipicolinate synthase from Corynebacterium jeikeium (strain K411).